The chain runs to 153 residues: Aspartate carbamoyltransferase regulatory chain (153 aa).

The Zn(2+) site is built by Cys-109, Cys-114, Cys-138, and Cys-141.

This sequence belongs to the PyrI family. Contains catalytic and regulatory chains. Zn(2+) serves as cofactor.

Involved in allosteric regulation of aspartate carbamoyltransferase. The sequence is that of Aspartate carbamoyltransferase regulatory chain from Cronobacter sakazakii (strain ATCC BAA-894) (Enterobacter sakazakii).